The primary structure comprises 954 residues: Glycine dehydrogenase (decarboxylating) (954 aa).

The residue at position 706 (Lys-706) is an N6-(pyridoxal phosphate)lysine.

This sequence belongs to the GcvP family. In terms of assembly, the glycine cleavage system is composed of four proteins: P, T, L and H. Pyridoxal 5'-phosphate is required as a cofactor.

It carries out the reaction N(6)-[(R)-lipoyl]-L-lysyl-[glycine-cleavage complex H protein] + glycine + H(+) = N(6)-[(R)-S(8)-aminomethyldihydrolipoyl]-L-lysyl-[glycine-cleavage complex H protein] + CO2. The glycine cleavage system catalyzes the degradation of glycine. The P protein binds the alpha-amino group of glycine through its pyridoxal phosphate cofactor; CO(2) is released and the remaining methylamine moiety is then transferred to the lipoamide cofactor of the H protein. The polypeptide is Glycine dehydrogenase (decarboxylating) (Pseudomonas syringae pv. tomato (strain ATCC BAA-871 / DC3000)).